The sequence spans 489 residues: Capsid protein (489 aa).

Residues 79-144 (GETSEEESDS…QPKTIPGQKQ (66 aa)) are disordered. The span at 81 to 94 (TSEEESDSGEEPEF) shows a compositional bias: acidic residues. Positions 95–110 (EQVRMDRTGGTEIPKE) are enriched in basic and acidic residues. The Nuclear localization signal motif lies at 122–125 (RKRK). Positions 135–144 (QPKTIPGQKQ) are enriched in polar residues. The CCHC-type zinc finger occupies 412 to 429 (CRCWICNIEGHYANECPN). Residues 467–489 (EEEEETSTEESDGSSTSEDSDSD) are disordered.

It belongs to the caulimoviridae capsid protein family. In terms of assembly, interacts (via nuclear localization signal) with host importin alpha.

It localises to the virion. The protein localises to the host nucleus. Self assembles to form an icosahedral capsid, about 50 nm in diameter, nm, composed of 420 subunits of the viral capsid protein. The capsid encapsulates the genomic dsDNA. Following virus entry into host cell, provides nuclear import of the viral genome. Virus particles do not enter the nucleus, but dock at the nuclear membrane through the interaction with host importins. This chain is Capsid protein, found in Arabidopsis thaliana (Mouse-ear cress).